The chain runs to 105 residues: Small ribosomal subunit protein uS10 (105 aa).

It belongs to the universal ribosomal protein uS10 family. As to quaternary structure, part of the 30S ribosomal subunit.

Functionally, involved in the binding of tRNA to the ribosomes. The sequence is that of Small ribosomal subunit protein uS10 from Synechococcus elongatus (strain ATCC 33912 / PCC 7942 / FACHB-805) (Anacystis nidulans R2).